The following is a 429-amino-acid chain: Adenylosuccinate synthetase (429 aa).

GTP-binding positions include 12–18 (GDEGKGK) and 40–42 (GHT). Asp-13 acts as the Proton acceptor in catalysis. Mg(2+) contacts are provided by Asp-13 and Gly-40. IMP contacts are provided by residues 13-16 (DEGK), 38-41 (NAGH), Thr-128, Arg-142, Gln-223, Thr-238, and Arg-302. His-41 functions as the Proton donor in the catalytic mechanism. 298–304 (VNTGRPR) provides a ligand contact to substrate. GTP contacts are provided by residues Arg-304, 330-332 (KLD), and 412-414 (GVG).

The protein belongs to the adenylosuccinate synthetase family. As to quaternary structure, homodimer. Mg(2+) is required as a cofactor.

Its subcellular location is the cytoplasm. It catalyses the reaction IMP + L-aspartate + GTP = N(6)-(1,2-dicarboxyethyl)-AMP + GDP + phosphate + 2 H(+). It participates in purine metabolism; AMP biosynthesis via de novo pathway; AMP from IMP: step 1/2. Functionally, plays an important role in the de novo pathway of purine nucleotide biosynthesis. Catalyzes the first committed step in the biosynthesis of AMP from IMP. This chain is Adenylosuccinate synthetase, found in Pseudarthrobacter chlorophenolicus (strain ATCC 700700 / DSM 12829 / CIP 107037 / JCM 12360 / KCTC 9906 / NCIMB 13794 / A6) (Arthrobacter chlorophenolicus).